Reading from the N-terminus, the 434-residue chain is Maltoporin (434 aa).

The first 25 residues, 1-25 (MKMKAKWLPIAAAVTAALASQAAFA), serve as a signal peptide directing secretion.

It belongs to the porin LamB (TC 1.B.3) family. As to quaternary structure, homotrimer formed of three 18-stranded antiparallel beta-barrels, containing three independent channels.

The protein resides in the cell outer membrane. The enzyme catalyses beta-maltose(in) = beta-maltose(out). Functionally, involved in the transport of maltose and maltodextrins. The sequence is that of Maltoporin from Aeromonas hydrophila.